The chain runs to 142 residues: Large ribosomal subunit protein uL11 (142 aa).

Belongs to the universal ribosomal protein uL11 family. As to quaternary structure, part of the ribosomal stalk of the 50S ribosomal subunit. Interacts with L10 and the large rRNA to form the base of the stalk. L10 forms an elongated spine to which L12 dimers bind in a sequential fashion forming a multimeric L10(L12)X complex. In terms of processing, one or more lysine residues are methylated.

Functionally, forms part of the ribosomal stalk which helps the ribosome interact with GTP-bound translation factors. In Xylella fastidiosa (strain Temecula1 / ATCC 700964), this protein is Large ribosomal subunit protein uL11.